A 383-amino-acid polypeptide reads, in one-letter code: uncharacterized protein (383 aa).

Disordered stretches follow at residues 1 to 30, 114 to 144, 262 to 289, and 341 to 360; these read MDLC…PTCT, ETKP…STAS, GEKR…ARTS, and AKDP…NSPQ. The span at 10 to 26 shows a compositional bias: acidic residues; that stretch reads DLENGENNEIQSTEETE. The span at 128 to 141 shows a compositional bias: low complexity; that stretch reads SSPSQTQAAPQGPS. Basic and acidic residues predominate over residues 262–271; the sequence is GEKRPSELAK.

This is an uncharacterized protein from Macaca fascicularis (Crab-eating macaque).